Here is a 317-residue protein sequence, read N- to C-terminus: Ferrochelatase (317 aa).

Fe cation is bound by residues His192 and Glu271.

This sequence belongs to the ferrochelatase family.

The protein localises to the cytoplasm. It catalyses the reaction heme b + 2 H(+) = protoporphyrin IX + Fe(2+). Its pathway is porphyrin-containing compound metabolism; protoheme biosynthesis; protoheme from protoporphyrin-IX: step 1/1. In terms of biological role, catalyzes the ferrous insertion into protoporphyrin IX. The polypeptide is Ferrochelatase (Citrifermentans bemidjiense (strain ATCC BAA-1014 / DSM 16622 / JCM 12645 / Bem) (Geobacter bemidjiensis)).